Here is a 276-residue protein sequence, read N- to C-terminus: Undecaprenyl-diphosphatase 2 (276 aa).

7 consecutive transmembrane segments (helical) span residues 3–23 (IWDI…EYAP), 48–68 (AANT…AFVF), 92–112 (LSIA…FLFE), 119–139 (LFSV…MLAA), 196–216 (ADFT…LSLI), 225–245 (DLLP…LFVV), and 255–275 (IKLV…FILF).

This sequence belongs to the UppP family.

Its subcellular location is the cell membrane. The enzyme catalyses di-trans,octa-cis-undecaprenyl diphosphate + H2O = di-trans,octa-cis-undecaprenyl phosphate + phosphate + H(+). Catalyzes the dephosphorylation of undecaprenyl diphosphate (UPP). Confers resistance to bacitracin. The chain is Undecaprenyl-diphosphatase 2 from Bacillus licheniformis (strain ATCC 14580 / DSM 13 / JCM 2505 / CCUG 7422 / NBRC 12200 / NCIMB 9375 / NCTC 10341 / NRRL NRS-1264 / Gibson 46).